Reading from the N-terminus, the 420-residue chain is Tyrosine--tRNA ligase (420 aa).

An L-tyrosine-binding site is contributed by Tyr-39. A 'HIGH' region motif is present at residues 44–53; it reads CTAPSLHIGS. Positions 176 and 180 each coordinate L-tyrosine. Positions 236–240 match the 'KMSKS' region motif; that stretch reads KMGKT. Residue Lys-239 participates in ATP binding. Positions 349–414 constitute an S4 RNA-binding domain; it reads IPLIDLLYDT…AGKKRHIKIL (66 aa).

The protein belongs to the class-I aminoacyl-tRNA synthetase family. TyrS type 1 subfamily. In terms of assembly, homodimer.

The protein localises to the cytoplasm. The enzyme catalyses tRNA(Tyr) + L-tyrosine + ATP = L-tyrosyl-tRNA(Tyr) + AMP + diphosphate + H(+). Functionally, catalyzes the attachment of tyrosine to tRNA(Tyr) in a two-step reaction: tyrosine is first activated by ATP to form Tyr-AMP and then transferred to the acceptor end of tRNA(Tyr). This chain is Tyrosine--tRNA ligase, found in Wolbachia pipientis subsp. Culex pipiens (strain wPip).